A 1130-amino-acid chain; its full sequence is Alpha-mannosidase 2 (1130 aa).

The Cytoplasmic portion of the chain corresponds to 1–14; that stretch reads MRTRVLRCRPFSTR. Residues 15–35 form a helical; Signal-anchor for type II membrane protein membrane-spanning segment; it reads ILLLLLFVLAFGVYCYFYNAS. The Lumenal segment spans residues 36–1130; the sequence is PQNYNKPRIS…MEVKTYKIRF (1095 aa). Asn117 is a glycosylation site (N-linked (GlcNAc...) asparagine). Zn(2+)-binding residues include His133 and Asp135. N-linked (GlcNAc...) asparagine glycosylation occurs at Asn166. Positions 247 and 527 each coordinate Zn(2+). Asp247 acts as the Nucleophile in catalysis. N-linked (GlcNAc...) asparagine glycans are attached at residues Asn622, Asn683, Asn1056, and Asn1095.

This sequence belongs to the glycosyl hydrolase 38 family. As to quaternary structure, homodimer; disulfide-linked. Zn(2+) is required as a cofactor. Post-translationally, N-glycosylated.

The protein localises to the microsome membrane. It is found in the golgi apparatus membrane. The catalysed reaction is N(4)-{beta-D-GlcNAc-(1-&gt;2)-alpha-D-Man-(1-&gt;3)-[alpha-D-Man-(1-&gt;3)-[alpha-D-Man-(1-&gt;6)]-alpha-D-Man-(1-&gt;6)]-beta-D-Man-(1-&gt;4)-beta-D-GlcNAc-(1-&gt;4)-beta-D-GlcNAc}-L-asparaginyl-[protein] + 2 H2O = 2 alpha-D-mannopyranose + an N(4)-{beta-D-GlcNAc-(1-&gt;2)-alpha-D-Man-(1-&gt;3)-[alpha-D-Man-(1-&gt;6)]-beta-D-Man-(1-&gt;4)-beta-D-GlcNAc-(1-&gt;4)-beta-D-GlcNAc}-L-asparaginyl-[protein]. The protein operates within protein modification; protein glycosylation. With respect to regulation, inhibited by swainsonine. Its function is as follows. Catalyzes the first committed step in the biosynthesis of complex N-glycans. It controls conversion of high mannose to complex N-glycans; the final hydrolytic step in the N-glycan maturation pathway. The protein is Alpha-mannosidase 2 of Spodoptera frugiperda (Fall armyworm).